We begin with the raw amino-acid sequence, 468 residues long: Na(+)/H(+) antiporter NhaA (468 aa).

Transmembrane regions (helical) follow at residues Phe32–Leu52, Leu83–Ile103, Ala119–Ile139, Gly148–Gly168, Phe178–Phe198, Gly205–Val225, Ala320–Val340, Gly354–Val374, Leu397–Phe417, and Leu428–Tyr448.

The protein belongs to the NhaA Na(+)/H(+) (TC 2.A.33) antiporter family.

The protein resides in the cell inner membrane. The enzyme catalyses Na(+)(in) + 2 H(+)(out) = Na(+)(out) + 2 H(+)(in). In terms of biological role, na(+)/H(+) antiporter that extrudes sodium in exchange for external protons. The protein is Na(+)/H(+) antiporter NhaA of Cupriavidus necator (strain ATCC 17699 / DSM 428 / KCTC 22496 / NCIMB 10442 / H16 / Stanier 337) (Ralstonia eutropha).